Reading from the N-terminus, the 311-residue chain is Glycosyltransferase 6 domain-containing protein 1 (311 aa).

The Cytoplasmic portion of the chain corresponds to 1–5 (MKAKR). A helical; Signal-anchor for type II membrane protein transmembrane segment spans residues 6–26 (RILLQLLTFCLFLLLLAKIHF). The Lumenal segment spans residues 27–311 (RNHQEEELLL…KIAHHPIDTL (285 aa)). Asparagine 77 carries N-linked (GlcNAc...) asparagine glycosylation. Residues 85–90 (FAVGSL), 176–178 (NIN), and 198–201 (HPWW) contribute to the substrate site. Catalysis depends on glutamate 266, which acts as the Nucleophile.

The protein belongs to the glycosyltransferase 6 family. Mn(2+) is required as a cofactor.

It localises to the membrane. The chain is Glycosyltransferase 6 domain-containing protein 1 (Glt6d1) from Mus musculus (Mouse).